Reading from the N-terminus, the 263-residue chain is Acyl-[acyl-carrier-protein]--UDP-N-acetylglucosamine O-acyltransferase (263 aa).

The protein belongs to the transferase hexapeptide repeat family. LpxA subfamily. As to quaternary structure, homotrimer.

It is found in the cytoplasm. It catalyses the reaction a (3R)-hydroxyacyl-[ACP] + UDP-N-acetyl-alpha-D-glucosamine = a UDP-3-O-[(3R)-3-hydroxyacyl]-N-acetyl-alpha-D-glucosamine + holo-[ACP]. Its pathway is glycolipid biosynthesis; lipid IV(A) biosynthesis; lipid IV(A) from (3R)-3-hydroxytetradecanoyl-[acyl-carrier-protein] and UDP-N-acetyl-alpha-D-glucosamine: step 1/6. In terms of biological role, involved in the biosynthesis of lipid A, a phosphorylated glycolipid that anchors the lipopolysaccharide to the outer membrane of the cell. This Campylobacter lari (strain RM2100 / D67 / ATCC BAA-1060) protein is Acyl-[acyl-carrier-protein]--UDP-N-acetylglucosamine O-acyltransferase.